A 160-amino-acid polypeptide reads, in one-letter code: MRCPFCGAEDTSVVDSRVSEEGSRIRRRRQCTACGKRFTTYETVEVRFPQIIKQGGNRVEFNREKLYTSFARALHKRPVPVGQVDAAIERILQKLLGGGAQEISSRTIGEWVMQELYKLDKVAYIRFASVYRSFEDVGDFQEVIREVQASPSSLDDEPPG.

A zinc finger spans residues 3 to 34; that stretch reads CPFCGAEDTSVVDSRVSEEGSRIRRRRQCTAC. Residues 49 to 139 form the ATP-cone domain; it reads PQIIKQGGNR…VYRSFEDVGD (91 aa).

Belongs to the NrdR family. The cofactor is Zn(2+).

Negatively regulates transcription of bacterial ribonucleotide reductase nrd genes and operons by binding to NrdR-boxes. This chain is Transcriptional repressor NrdR, found in Nitrosomonas eutropha (strain DSM 101675 / C91 / Nm57).